A 489-amino-acid polypeptide reads, in one-letter code: Glutamyl-tRNA(Gln) amidotransferase subunit A (489 aa).

Catalysis depends on charge relay system residues K80 and S160. S184 serves as the catalytic Acyl-ester intermediate.

It belongs to the amidase family. GatA subfamily. In terms of assembly, heterotrimer of A, B and C subunits.

The catalysed reaction is L-glutamyl-tRNA(Gln) + L-glutamine + ATP + H2O = L-glutaminyl-tRNA(Gln) + L-glutamate + ADP + phosphate + H(+). Its function is as follows. Allows the formation of correctly charged Gln-tRNA(Gln) through the transamidation of misacylated Glu-tRNA(Gln) in organisms which lack glutaminyl-tRNA synthetase. The reaction takes place in the presence of glutamine and ATP through an activated gamma-phospho-Glu-tRNA(Gln). In Wolbachia sp. subsp. Brugia malayi (strain TRS), this protein is Glutamyl-tRNA(Gln) amidotransferase subunit A.